Here is a 481-residue protein sequence, read N- to C-terminus: Small ribosomal subunit protein bS1 (481 aa).

S1 motif domains lie at 36–105 (GDIV…LSKK), 123–188 (DEAV…LSRR), 209–277 (GTIR…LSLK), and 294–363 (GQIV…LSLK). Residues 429 to 467 (TAQMEKFAAAEAAGRGADDQSSASSAPSEKTAGGSLASD) form a disordered region. Positions 437–456 (AAEAAGRGADDQSSASSAPS) are enriched in low complexity.

It belongs to the bacterial ribosomal protein bS1 family.

Functionally, binds mRNA; thus facilitating recognition of the initiation point. It is needed to translate mRNA with a short Shine-Dalgarno (SD) purine-rich sequence. The polypeptide is Small ribosomal subunit protein bS1 (rpsA) (Mycobacterium tuberculosis (strain CDC 1551 / Oshkosh)).